The primary structure comprises 116 residues: Galanin-like peptide (116 aa).

The first 24 residues, 1-24 (MAPPSVPLVLLLVLLLSLAETPAS), serve as a signal peptide directing secretion. Positions 87 to 116 (NVMETFAKPEIGDLGMLSMKIPKEEDVLKS) are excised as a propeptide.

The protein belongs to the galanin family. Isoform 2 is found in ganglia of ganglioneuroma and ganglioneuroblastoma, as well as in differentiated tumor cells of neuroblastoma tissues. Not found in undifferentiated neuroblasts. Isoform 2 is found in the skin, in pericytes covering microvascular arterioles and venules on their abluminal surfaces. In larger vessels, isoform 2 is expressed in layers of smooth muscle cells. Isoform 2 is not detected in endothelial cells.

Its subcellular location is the secreted. Hypothalamic neuropeptide which binds to the G-protein-coupled galanin receptors (GALR1, GALR2 and GALR3). Involved in a large number of putative physiological functions in CNS homeostatic processes, including the regulation of gonadotropin-releasing hormone secretion. Its function is as follows. Exhibits potent and dose-dependent vasoconstrictor and anti-edema activity in the cutaneous microvasculature, a physiologic effects which does not appear to be mediated via GALR1 or GALR2. Exhibits antimicrobial activity against Gram-negative bacterias, inducing bacterial membrane blebbing. This chain is Galanin-like peptide (GALP), found in Homo sapiens (Human).